The chain runs to 752 residues: Pre-mRNA-processing factor 39 (752 aa).

The segment at methionine 1–leucine 148 is disordered. Over residues threonine 28–leucine 42 the composition is skewed to polar residues. Composition is skewed to low complexity over residues threonine 43 to proline 56, glutamine 76 to serine 94, and glutamate 133 to leucine 148. HAT repeat units follow at residues asparagine 180–lysine 212, glycine 214–glutamate 246, and glutamate 254–glutamate 289. Positions asparagine 347–proline 374 are disordered. Acidic residues predominate over residues aspartate 352 to glycine 361. HAT repeat units follow at residues alanine 408 to glutamate 440 and glycine 442 to serine 474. Positions serine 678–aspartate 699 are enriched in basic and acidic residues. The disordered stretch occupies residues serine 678 to alanine 703. The HAT 6 repeat unit spans residues glutamine 700–glutamine 731.

The protein belongs to the PRP39 family.

The protein resides in the nucleus. Its function is as follows. Involved in pre-mRNA splicing. This chain is Pre-mRNA-processing factor 39 (prpf39), found in Danio rerio (Zebrafish).